Reading from the N-terminus, the 2264-residue chain is Protein Ycf2 (2264 aa).

Residue 1611–1618 coordinates ATP; that stretch reads GSIGTGRS.

It belongs to the Ycf2 family.

Its subcellular location is the plastid. It localises to the chloroplast stroma. In terms of biological role, probable ATPase of unknown function. Its presence in a non-photosynthetic plant (Epifagus virginiana) and experiments in tobacco indicate that it has an essential function which is probably not related to photosynthesis. This chain is Protein Ycf2, found in Lactuca sativa (Garden lettuce).